The chain runs to 243 residues: Venom nerve growth factor (243 aa).

A signal peptide spans 1-18 (MSMLCYTLIIAFLIGIWA). A propeptide spanning residues 19 to 125 (APKSEDNVPL…TLNRNIWANN (107 aa)) is cleaved from the precursor. Over residues 47-66 (GLKTSRNTDQHHPTPKKSED) the composition is skewed to basic and acidic residues. Residues 47–70 (GLKTSRNTDQHHPTPKKSEDQELG) are disordered. Disulfide bonds link C139–C204, C182–C232, and C192–C234. N-linked (GlcNAc...) asparagine glycosylation is present at N148.

Belongs to the NGF-beta family. As to quaternary structure, homodimer. As to expression, expressed by the venom gland.

Its subcellular location is the secreted. Functionally, nerve growth factor is important for the development and maintenance of the sympathetic and sensory nervous systems. It stimulates division and differentiation of sympathetic and embryonic sensory neurons as well as basal forebrain cholinergic neurons in the brain. Its relevance in the snake venom is not clear. However, it has been shown to inhibit metalloproteinase-dependent proteolysis of platelet glycoprotein Ib alpha, suggesting a metalloproteinase inhibition to prevent metalloprotease autodigestion and/or protection against prey proteases. Binds a lipid between the two protein chains in the homodimer. The lipid-bound form promotes histamine relase from mouse mast cells, contrary to the lipid-free form. This Bungarus multicinctus (Many-banded krait) protein is Venom nerve growth factor.